We begin with the raw amino-acid sequence, 176 residues long: RNA pyrophosphohydrolase (176 aa).

A Nudix hydrolase domain is found at 6-149; that stretch reads GYRPNVGIVI…KRDVYRRVMK (144 aa). Positions 38–59 match the Nudix box motif; it reads GGINPGESAEQAMYRELFEEVG.

This sequence belongs to the Nudix hydrolase family. RppH subfamily. Requires a divalent metal cation as cofactor.

In terms of biological role, accelerates the degradation of transcripts by removing pyrophosphate from the 5'-end of triphosphorylated RNA, leading to a more labile monophosphorylated state that can stimulate subsequent ribonuclease cleavage. The sequence is that of RNA pyrophosphohydrolase from Salmonella paratyphi C (strain RKS4594).